Here is a 438-residue protein sequence, read N- to C-terminus: MSVLVVGMSHRSAPVALLEKLSMDDGVRTNTVSDLVARPSLAEAMIVSTCNRLEVYAMTSSFHTGVNDVVEVLHDMSGVDMEELRGYLYVRYADAAAEHMMEVTSGLDSMVVGEQQIIGQVRTAYHSATEAGTVGPALHGLVQASLHTGKRVHTETDIDDAGASMVSFACDEALAQMSATNFAGCRALVLGAGAMASLAATHLGRLGIEHITVANRTFERAQRLADHAVEAGVAASAIEFERRMDVLCDVDVVVSATGANTFTIEAANIPAAHGDLMMIDLSLPRDISDDVAEVPGVHLVNIEKLRDVASSGEAKDHAAQRIVAEELEAYTSAQRIRDVAPAVAALRRHASSLIDSELARLSTRVPSMDEDDFSEVQRTVRRVVDKLLHQPTVRVKELAAQSGTVSYDTAIQELFGLAVEATPVAVNVDELPERINKR.

Residues 49–52 (TCNR), S109, 114–116 (EQQ), and Q120 each bind substrate. The active-site Nucleophile is the C50. 191–196 (GAGAMA) lines the NADP(+) pocket.

It belongs to the glutamyl-tRNA reductase family. As to quaternary structure, homodimer.

The catalysed reaction is (S)-4-amino-5-oxopentanoate + tRNA(Glu) + NADP(+) = L-glutamyl-tRNA(Glu) + NADPH + H(+). It participates in porphyrin-containing compound metabolism; protoporphyrin-IX biosynthesis; 5-aminolevulinate from L-glutamyl-tRNA(Glu): step 1/2. In terms of biological role, catalyzes the NADPH-dependent reduction of glutamyl-tRNA(Glu) to glutamate 1-semialdehyde (GSA). The protein is Glutamyl-tRNA reductase of Corynebacterium diphtheriae (strain ATCC 700971 / NCTC 13129 / Biotype gravis).